Consider the following 159-residue polypeptide: Phosphopantetheine adenylyltransferase (159 aa).

Residue Ser-9 coordinates substrate. ATP is bound by residues 9–10 and His-17; that span reads SF. Residues Lys-41, Leu-73, and Lys-87 each contribute to the substrate site. ATP contacts are provided by residues 88–90, Glu-98, and 123–129; these read GLR and NIHISSS.

Belongs to the bacterial CoaD family. Homohexamer. The cofactor is Mg(2+).

Its subcellular location is the cytoplasm. It catalyses the reaction (R)-4'-phosphopantetheine + ATP + H(+) = 3'-dephospho-CoA + diphosphate. Its pathway is cofactor biosynthesis; coenzyme A biosynthesis; CoA from (R)-pantothenate: step 4/5. Functionally, reversibly transfers an adenylyl group from ATP to 4'-phosphopantetheine, yielding dephospho-CoA (dPCoA) and pyrophosphate. This Clostridium beijerinckii (strain ATCC 51743 / NCIMB 8052) (Clostridium acetobutylicum) protein is Phosphopantetheine adenylyltransferase.